The primary structure comprises 53 residues: Sodium/potassium-transporting ATPase subunit gamma (53 aa).

A helical membrane pass occupies residues 16–34 (GGLIFAALAFIVGLVIILS).

Belongs to the FXYD family. In terms of assembly, regulatory subunit of the sodium/potassium-transporting ATPase which is composed of a catalytic alpha subunit, an auxiliary non-catalytic beta subunit and an additional regulatory subunit. In terms of processing, the N-terminus is blocked. In terms of tissue distribution, highest levels expressed in the kidney and spleen. Restricted to the basolateral membrane in renal epithelial cells and varies in its level of expression along the nephron.

It is found in the membrane. Functionally, may be involved in forming the receptor site for cardiac glycoside binding or may modulate the transport function of the sodium ATPase. The protein is Sodium/potassium-transporting ATPase subunit gamma (FXYD2) of Ovis aries (Sheep).